Consider the following 329-residue polypeptide: Isopenicillin N synthase (329 aa).

Isopenicillin N is bound by residues Arg-87, Tyr-91, and Tyr-189. N-[(5S)-5-amino-5-carboxypentanoyl]-L-cysteinyl-D-valine contacts are provided by Arg-87, Tyr-91, Tyr-189, His-212, and Asp-214. Residues 180–286 (TLSAVTLIHY…RLSLPFFLHA (107 aa)) form the Fe2OG dioxygenase domain. Fe(2+) is bound by residues His-212, Asp-214, and His-268. Residue Arg-277 participates in 2-oxoglutarate binding. Residue Ser-279 participates in isopenicillin N binding. Ser-279 contributes to the N-[(5S)-5-amino-5-carboxypentanoyl]-L-cysteinyl-D-valine binding site.

The protein belongs to the iron/ascorbate-dependent oxidoreductase family. Fe cation is required as a cofactor. The cofactor is L-ascorbate.

The enzyme catalyses N-[(5S)-5-amino-5-carboxypentanoyl]-L-cysteinyl-D-valine + O2 = isopenicillin N + 2 H2O. It participates in antibiotic biosynthesis; penicillin G biosynthesis; penicillin G from L-alpha-aminoadipate and L-cysteine and L-valine: step 2/3. In terms of biological role, removes, in the presence of oxygen, 4 hydrogen atoms from delta-L-(alpha-aminoadipyl)-L-cysteinyl-D-valine (ACV) to form the azetidinone and thiazolidine rings of isopenicillin. In Streptomyces griseus, this protein is Isopenicillin N synthase (pcbC).